Here is a 345-residue protein sequence, read N- to C-terminus: Biotin synthase (345 aa).

The Radical SAM core domain maps to 60–287 (NQVQLSTLLS…RTMVRLSAGR (228 aa)). C75, C79, and C82 together coordinate [4Fe-4S] cluster. [2Fe-2S] cluster is bound by residues C119, C150, C210, and R282.

This sequence belongs to the radical SAM superfamily. Biotin synthase family. In terms of assembly, homodimer. The cofactor is [4Fe-4S] cluster. [2Fe-2S] cluster is required as a cofactor.

The catalysed reaction is (4R,5S)-dethiobiotin + (sulfur carrier)-SH + 2 reduced [2Fe-2S]-[ferredoxin] + 2 S-adenosyl-L-methionine = (sulfur carrier)-H + biotin + 2 5'-deoxyadenosine + 2 L-methionine + 2 oxidized [2Fe-2S]-[ferredoxin]. The protein operates within cofactor biosynthesis; biotin biosynthesis; biotin from 7,8-diaminononanoate: step 2/2. Its function is as follows. Catalyzes the conversion of dethiobiotin (DTB) to biotin by the insertion of a sulfur atom into dethiobiotin via a radical-based mechanism. The protein is Biotin synthase of Polaromonas naphthalenivorans (strain CJ2).